Consider the following 326-residue polypeptide: Ribosomal large subunit pseudouridine synthase D (326 aa).

Aspartate 144 is a catalytic residue.

The protein belongs to the pseudouridine synthase RluA family.

The protein localises to the cytoplasm. The catalysed reaction is uridine(1911/1915/1917) in 23S rRNA = pseudouridine(1911/1915/1917) in 23S rRNA. Its function is as follows. Responsible for synthesis of pseudouridine from uracil at positions 1911, 1915 and 1917 in 23S ribosomal RNA. In Borreliella burgdorferi (strain ATCC 35210 / DSM 4680 / CIP 102532 / B31) (Borrelia burgdorferi), this protein is Ribosomal large subunit pseudouridine synthase D.